The following is a 97-amino-acid chain: MKRICSIYRSPKRNEMYLYVLKSDVLKRVPPELMVAFGKPVHAFDLVLSPERALSREDINVVLENLDSQGYHLQMPPAEDDYIEHLPEELLRRNDPM.

In terms of domain architecture, YcgL spans 3–87 (RICSIYRSPK…AEDDYIEHLP (85 aa)).

This is YcgL domain-containing protein Psyr_1564 from Pseudomonas syringae pv. syringae (strain B728a).